A 194-amino-acid chain; its full sequence is Molybdenum cofactor guanylyltransferase (194 aa).

Residues 12–14 (LAG), Lys25, Asn53, Asp70, and Asp100 contribute to the GTP site. Mg(2+) is bound at residue Asp100.

It belongs to the MobA family. In terms of assembly, monomer. It depends on Mg(2+) as a cofactor.

The protein resides in the cytoplasm. It carries out the reaction Mo-molybdopterin + GTP + H(+) = Mo-molybdopterin guanine dinucleotide + diphosphate. In terms of biological role, transfers a GMP moiety from GTP to Mo-molybdopterin (Mo-MPT) cofactor (Moco or molybdenum cofactor) to form Mo-molybdopterin guanine dinucleotide (Mo-MGD) cofactor. In Aliivibrio fischeri (strain ATCC 700601 / ES114) (Vibrio fischeri), this protein is Molybdenum cofactor guanylyltransferase.